Here is a 1273-residue protein sequence, read N- to C-terminus: MKRRLDDQESPVYAAQQRRIPGSTEAFPHQHRVLAPAPPVYEAVSETMQSATGIQYSVTPSYQVSAMPQSSGSHGPAIAAVHSSHHHPTAVQPHGGQVVQSHAHPAPPVAPVQGQQQFQRLKVEDALSYLDQVKLQFGSQPQVYNDFLDIMKEFKSQSIDTPGVISRVSQLFKGHPDLIMGFNTFLPPGYKIEVQTNDMVNVTTPGQVHQIPTHGIQPQPQPPPQHPSQPSAQSAPAPAQPAPQPPPAKVSKPSQLQAHTPASQQTPPLPPYASPRSPPVQPHTPVTISLGTAPSLQNNQPVEFNHAINYVNKIKNRFQGQPDIYKAFLEILHTYQKEQRNAKEAGGNYTPALTEQEVYAQVARLFKNQEDLLSEFGQFLPDANSSVLLSKTTAEKVDSVRNDHGGTVKKPQLNNKPQRPSQNGCQIRRHPTGTTPPVKKKPKLLNLKDSSMADASKHGGGTESLFFDKVRKALRSAEAYENFLRCLVIFNQEVISRAELVQLVSPFLGKFPELFNWFKNFLGYKESVHLETYPKERATEGIAMEIDYASCKRLGSSYRALPKSYQQPKCTGRTPLCKEVLNDTWVSFPSWSEDSTFVSSKKTQYEEHIYRCEDERFELDVVLETNLATIRVLEAIQKKLSRLSAEEQAKFRLDNTLGGTSEVIHRKALQRIYADKAADIIDGLRKNPSIAVPIVLKRLKMKEEEWREAQRGFNKVWREQNEKYYLKSLDHQGINFKQNDTKVLRSKSLLNEIESIYDERQEQATEENAGVPVGPHLSLAYEDKQILEDAAALIIHHVKRQTGIQKEDKYKIKQIMHHFIPDLLFAQRGDLSDVEEEEEEEMDVDEATGAVKKHNGVGGSPPKSKLLFSNTAAQKLRGMDEVYNLFYVNNNWYIFMRLHQILCLRLLRICSQAERQIEEENREREWEREVLGIKRDKSDSPAIQLRLKEPMDVDVEDYYPAFLDMVRSLLDGNIDSSQYEDSLREMFTIHAYIAFTMDKLIQSIVRQLQHIVSDEICVQVTDLYLAENNNGATGGQLNTQNSRSLLESTYQRKAEQLMSDENCFKLMFIQSQGQVQLTIELLDTEEENSDDPVEAERWSDYVERYMNSDTTSPELREHLAQKPVFLPRNLRRIRKCQRGREQQEKEGKEGNSKKTMENVDSLDKLECRFKLNSYKMVYVIKSEDYMYRRTALLRAHQSHERVSKRLHQRFQAWVDKWTKEHVPREMAAETSKWLMGEGLEGLVPCTTTCDTETLHFVSINKYRVKYGTVFKAP.

2 disordered regions span residues 1–23 and 87–110; these read MKRR…IPGS and HPTA…PPVA. S10 carries the post-translational modification Phosphoserine. Positions 119–189 constitute a PAH 1 domain; it reads QRLKVEDALS…MGFNTFLPPG (71 aa). An interaction with HCFC1 region spans residues 119-196; that stretch reads QRLKVEDALS…PPGYKIEVQT (78 aa). Glycyl lysine isopeptide (Lys-Gly) (interchain with G-Cter in SUMO2) cross-links involve residues K122 and K134. A disordered region spans residues 205–297; sequence PGQVHQIPTH…ISLGTAPSLQ (93 aa). The interval 205–480 is interaction with REST; it reads PGQVHQIPTH…RKALRSAEAY (276 aa). The segment covering 228–237 has biased composition (low complexity); it reads SQPSAQSAPA. Pro residues predominate over residues 238–248; the sequence is PAQPAPQPPPA. Polar residues predominate over residues 252–266; the sequence is KPSQLQAHTPASQQT. The segment covering 267–282 has biased composition (pro residues); the sequence is PPLPPYASPRSPPVQP. S277 bears the Phosphoserine mark. Position 284 is a phosphothreonine (T284). Residues 284 to 297 are compositionally biased toward polar residues; it reads TPVTISLGTAPSLQ. Positions 300 to 383 constitute a PAH 2 domain; the sequence is QPVEFNHAIN…SEFGQFLPDA (84 aa). The disordered stretch occupies residues 398–446; it reads DSVRNDHGGTVKKPQLNNKPQRPSQNGCQIRRHPTGTTPPVKKKPKLLN. The span at 412-425 shows a compositional bias: polar residues; that stretch reads QLNNKPQRPSQNGC. The PAH 3 domain maps to 456 to 525; it reads SKHGGGTESL…NWFKNFLGYK (70 aa). The segment at 458–525 is interaction with SAP30; it reads HGGGTESLFF…NWFKNFLGYK (68 aa). Position 469 is an N6-acetyllysine (K469). Positions 523–850 are interaction with NCOR1; that stretch reads GYKESVHLET…EMDVDEATGA (328 aa). The interval 524–659 is interaction with SUDS3 and SAP130; that stretch reads YKESVHLETY…KFRLDNTLGG (136 aa). K563 participates in a covalent cross-link: Glycyl lysine isopeptide (Lys-Gly) (interchain with G-Cter in SUMO2). Positions 687-829 are interaction with HDAC1 and ARID4B; that stretch reads NPSIAVPIVL…IPDLLFAQRG (143 aa). 2 positions are modified to phosphoserine: S832 and S860. K865 and K875 each carry N6-acetyllysine. The segment at 888-967 is interaction with OGT; that stretch reads VNNNWYIFMR…YYPAFLDMVR (80 aa). Residues 903-932 adopt a coiled-coil conformation; sequence CLRLLRICSQAERQIEEENREREWEREVLG. Phosphoserine is present on residues S940, S1089, and S1112. The tract at residues 1136 to 1156 is disordered; the sequence is CQRGREQQEKEGKEGNSKKTM. Positions 1138-1156 are enriched in basic and acidic residues; that stretch reads RGREQQEKEGKEGNSKKTM.

As to quaternary structure, interacts with ARID4B, BRMS1L, HCFC1, HDAC1, HDAC2, MXI1, SAP30L, SAP130, SFPQ and TOPORS. Interacts with OGT (via TPRs 1-6); the interaction mediates transcriptional repression in parallel with histone deacetylase. Interacts with BAZ2A, MXD1, MXD3, MXD4, MBD2, DACH1, NCOR1, NR4A2, REST, RLIM, SAP30, SETDB1, SMYD2, and SUDS3. Interacts with PHF12 in a complex composed of HDAC1, PHF12 and SAP30. Interacts with TET1; the interaction recruits SIN3A to gene promoters. The large PER complex involved in the histone deacetylation is composed of at least HDAC1, PER2, SFPQ and SIN3A. Interacts with KLF11. Interacts with PPHLN1. Found in a complex with YY1, GON4L and HDAC1. Interacts (via PAH2) with FOXK1. Interacts with FOXK2. Found in a complex composed of at least SINHCAF, SIN3A, HDAC1, SAP30, RBBP4, OGT and TET1. Interacts with SINHCAF. Interacts with SPHK2. SUMO1 sumoylated by TOPORS. Probably desumoylated by SENP2. In terms of tissue distribution, expressed in the developing brain, with highest levels of expression detected in the ventricular zone of various cortical regions.

The protein localises to the nucleus. Its subcellular location is the nucleolus. In terms of biological role, acts as a transcriptional repressor. Corepressor for REST. Interacts with MXI1 to repress MYC responsive genes and antagonize MYC oncogenic activities. Also interacts with MXD1-MAX heterodimers to repress transcription by tethering SIN3A to DNA. Acts cooperatively with OGT to repress transcription in parallel with histone deacetylation. Involved in the control of the circadian rhythms. Required for the transcriptional repression of circadian target genes, such as PER1, mediated by the large PER complex through histone deacetylation. Cooperates with FOXK1 to regulate cell cycle progression probably by repressing cell cycle inhibitor genes expression. Required for cortical neuron differentiation and callosal axon elongation. This chain is Paired amphipathic helix protein Sin3a, found in Homo sapiens (Human).